The primary structure comprises 260 residues: Ribosomal protein L11 methyltransferase (260 aa).

4 residues coordinate S-adenosyl-L-methionine: threonine 119, glycine 140, aspartate 162, and asparagine 203.

The protein belongs to the methyltransferase superfamily. PrmA family.

It is found in the cytoplasm. It carries out the reaction L-lysyl-[protein] + 3 S-adenosyl-L-methionine = N(6),N(6),N(6)-trimethyl-L-lysyl-[protein] + 3 S-adenosyl-L-homocysteine + 3 H(+). In terms of biological role, methylates ribosomal protein L11. In Thermosipho africanus (strain TCF52B), this protein is Ribosomal protein L11 methyltransferase.